Here is a 335-residue protein sequence, read N- to C-terminus: Glycerol-3-phosphate dehydrogenase [NAD(P)+] (335 aa).

NADPH-binding residues include Ser-10, Phe-11, Arg-31, and Lys-105. Sn-glycerol 3-phosphate contacts are provided by Lys-105, Gly-136, and Ser-138. Ala-140 contacts NADPH. Residues Lys-191, Asp-244, Ser-254, Arg-255, and Asn-256 each coordinate sn-glycerol 3-phosphate. Lys-191 functions as the Proton acceptor in the catalytic mechanism. Arg-255 contributes to the NADPH binding site. NADPH is bound by residues Val-279 and Glu-281.

This sequence belongs to the NAD-dependent glycerol-3-phosphate dehydrogenase family.

The protein resides in the cytoplasm. It catalyses the reaction sn-glycerol 3-phosphate + NAD(+) = dihydroxyacetone phosphate + NADH + H(+). The enzyme catalyses sn-glycerol 3-phosphate + NADP(+) = dihydroxyacetone phosphate + NADPH + H(+). It participates in membrane lipid metabolism; glycerophospholipid metabolism. Functionally, catalyzes the reduction of the glycolytic intermediate dihydroxyacetone phosphate (DHAP) to sn-glycerol 3-phosphate (G3P), the key precursor for phospholipid synthesis. This is Glycerol-3-phosphate dehydrogenase [NAD(P)+] from Leptospira interrogans serogroup Icterohaemorrhagiae serovar Lai (strain 56601).